The chain runs to 599 residues: Elongation factor 4 (599 aa).

Positions 5–187 (SHIRNFSIIA…RLVQTIPAPT (183 aa)) constitute a tr-type G domain. GTP contacts are provided by residues 17 to 22 (DHGKST) and 134 to 137 (NKMD).

It belongs to the TRAFAC class translation factor GTPase superfamily. Classic translation factor GTPase family. LepA subfamily.

Its subcellular location is the cell inner membrane. It catalyses the reaction GTP + H2O = GDP + phosphate + H(+). Functionally, required for accurate and efficient protein synthesis under certain stress conditions. May act as a fidelity factor of the translation reaction, by catalyzing a one-codon backward translocation of tRNAs on improperly translocated ribosomes. Back-translocation proceeds from a post-translocation (POST) complex to a pre-translocation (PRE) complex, thus giving elongation factor G a second chance to translocate the tRNAs correctly. Binds to ribosomes in a GTP-dependent manner. The chain is Elongation factor 4 from Ectopseudomonas mendocina (strain ymp) (Pseudomonas mendocina).